The chain runs to 159 residues: Probable chemoreceptor glutamine deamidase CheD 2 (159 aa).

Belongs to the CheD family.

The enzyme catalyses L-glutaminyl-[protein] + H2O = L-glutamyl-[protein] + NH4(+). Probably deamidates glutamine residues to glutamate on methyl-accepting chemotaxis receptors (MCPs), playing an important role in chemotaxis. The chain is Probable chemoreceptor glutamine deamidase CheD 2 from Anaeromyxobacter dehalogenans (strain 2CP-C).